The sequence spans 141 residues: Inclusion membrane protein D (141 aa).

The next 2 helical transmembrane spans lie at 38–58 and 68–88; these read VAVAVATILAVALLVVAGLLF and VLAASLFFGVGAFLLGGALVG.

Its subcellular location is the secreted. The protein localises to the host vacuole. The protein resides in the host pathogen-containing vacuole. It is found in the host pathogen-containing vacuole membrane. Its function is as follows. Inclusion membrane protein probably involved in early modification events of the chlamydial inclusion. In Chlamydia trachomatis serovar D (strain ATCC VR-885 / DSM 19411 / UW-3/Cx), this protein is Inclusion membrane protein D (incD).